The chain runs to 1503 residues: MAAPAEPCAGQGVWNQTEPEPAATSLLSLCFLRTAGVWVPPMYLWVLGPIYLLFIHHHGRGYLRMSPLFKAKMVLGFALIVLCTSSVAVALWKIQQGTPEAPEFLIHPTVWLTTMSFAVFLIHTERKKGVQSSGVLFGYWLLCFVLPATNAAQQASGAGFQSDPVRHLSTYLCLSLVVAQFVLSCLADQPPFFPEDPQQSNPCPETGAAFPSKATFWWVSGLVWRGYRRPLRPKDLWSLGRENSSEELVSRLEKEWMRNRSAARRHNKAIAFKRKGGSGMKAPETEPFLRQEGSQWRPLLKAIWQVFHSTFLLGTLSLIISDVFRFTVPKLLSLFLEFIGDPKPPAWKGYLLAVLMFLSACLQTLFEQQNMYRLKVLQMRLRSAITGLVYRKVLALSSGSRKASAVGDVVNLVSVDVQRLTESVLYLNGLWLPLVWIVVCFVYLWQLLGPSALTAIAVFLSLLPLNFFISKKRNHHQEEQMRQKDSRARLTSSILRNSKTIKFHGWEGAFLDRVLGIRGQELGALRTSGLLFSVSLVSFQVSTFLVALVVFAVHTLVAENAMNAEKAFVTLTVLNILNKAQAFLPFSIHSLVQARVSFDRLVTFLCLEEVDPGVVDSSSSGSAAGKDCITIHSATFAWSQESPPCLHRINLTVPQGCLLAVVGPVGAGKSSLLSALLGELSKVEGFVSIEGAVAYVPQEAWVQNTSVVENVCFGQELDPPWLERVLEACALQPDVDSFPEGIHTSIGEQGMNLSGGQKQRLSLARAVYRKAAVYLLDDPLAALDAHVGQHVFNQVIGPGGLLQGTTRILVTHALHILPQADWIIVLANGAIAEMGSYQELLQRKGALMCLLDQARQPGDRGEGETEPGTSTKDPRGTSAGRRPELRRERSIKSVPEKDRTTSEAQTEVPLDDPDRAGWPAGKDSIQYGRVKATVHLAYLRAVGTPLCLYALFLFLCQQVASFCRGYWLSLWADDPAVGGQQTQAALRGGIFGLLGCLQAIGLFASMAAVLLGGARASRLLFQRLLWDVVRSPISFFERTPIGHLLNRFSKETDTVDVDIPDKLRSLLMYAFGLLEVSLVVAVATPLATVAILPLFLLYAGFQSLYVVSSCQLRRLESASYSSVCSHMAETFQGSTVVRAFRTQAPFVAQNNARVDESQRISFPRLVADRWLAANVELLGNGLVFAAATCAVLSKAHLSAGLVGFSVSAALQVTQTLQWVVRNWTDLENSIVSVERMQDYAWTPKEAPWRLPTCAAQPPWPQGGQIEFRDFGLRYRPELPLAVQGVSFKIHAGEKVGIVGRTGAGKSSLASGLLRLQEAAEGGIWIDGVPIAHVGLHTLRSRISIIPQDPILFPGSLRMNLDLLQEHSDEAIWAALETVQLKALVASLPGQLQYKCADRGEDLSVGQKQLLCLARALLRKTQILILDEATAAVDPGTELQMQAMLGSWFAQCTVLLIAHRLRSVMDCARVLVMDKGQVAESGSPAQLLAQKGLFYRLAQESGLV.

At 1-31 the chain is on the extracellular side; that stretch reads MAAPAEPCAGQGVWNQTEPEPAATSLLSLCF. The N-linked (GlcNAc...) asparagine glycan is linked to Asn15. The chain crosses the membrane as a helical span at residues 32–52; the sequence is LRTAGVWVPPMYLWVLGPIYL. The Cytoplasmic portion of the chain corresponds to 53 to 72; that stretch reads LFIHHHGRGYLRMSPLFKAK. A helical membrane pass occupies residues 73 to 93; the sequence is MVLGFALIVLCTSSVAVALWK. The Extracellular portion of the chain corresponds to 94–98; sequence IQQGT. Residues 99–119 traverse the membrane as a helical segment; sequence PEAPEFLIHPTVWLTTMSFAV. At 120–131 the chain is on the cytoplasmic side; sequence FLIHTERKKGVQ. Residues 132–149 traverse the membrane as a helical segment; it reads SSGVLFGYWLLCFVLPAT. Residues 150–167 are Extracellular-facing; it reads NAAQQASGAGFQSDPVRH. The helical transmembrane segment at 168 to 188 threads the bilayer; the sequence is LSTYLCLSLVVAQFVLSCLAD. Topologically, residues 189–302 are cytoplasmic; sequence QPPFFPEDPQ…GSQWRPLLKA (114 aa). A helical transmembrane segment spans residues 303–323; the sequence is IWQVFHSTFLLGTLSLIISDV. One can recognise an ABC transmembrane type-1 1 domain in the interval 311–593; sequence FLLGTLSLII…LPFSIHSLVQ (283 aa). The Extracellular portion of the chain corresponds to 324 to 349; that stretch reads FRFTVPKLLSLFLEFIGDPKPPAWKG. The chain crosses the membrane as a helical span at residues 350–370; it reads YLLAVLMFLSACLQTLFEQQN. Residues 371–426 lie on the Cytoplasmic side of the membrane; the sequence is MYRLKVLQMRLRSAITGLVYRKVLALSSGSRKASAVGDVVNLVSVDVQRLTESVLY. Residues 427-447 traverse the membrane as a helical segment; the sequence is LNGLWLPLVWIVVCFVYLWQL. Topologically, residues 448–450 are extracellular; the sequence is LGP. A helical transmembrane segment spans residues 451–471; the sequence is SALTAIAVFLSLLPLNFFISK. Residues 472–533 lie on the Cytoplasmic side of the membrane; that stretch reads KRNHHQEEQM…ALRTSGLLFS (62 aa). A helical transmembrane segment spans residues 534–554; that stretch reads VSLVSFQVSTFLVALVVFAVH. Residues 555–575 lie on the Extracellular side of the membrane; that stretch reads TLVAENAMNAEKAFVTLTVLN. The chain crosses the membrane as a helical span at residues 576-596; that stretch reads ILNKAQAFLPFSIHSLVQARV. The Cytoplasmic segment spans residues 597–939; it reads SFDRLVTFLC…VKATVHLAYL (343 aa). In terms of domain architecture, ABC transporter 1 spans 629–853; it reads ITIHSATFAW…KGALMCLLDQ (225 aa). Residue 663-670 participates in ATP binding; that stretch reads GPVGAGKS. Residues 854–919 are disordered; that stretch reads ARQPGDRGEG…LDDPDRAGWP (66 aa). The segment covering 881–901 has biased composition (basic and acidic residues); the sequence is RRPELRRERSIKSVPEKDRTT. A helical transmembrane segment spans residues 940–960; sequence RAVGTPLCLYALFLFLCQQVA. In terms of domain architecture, ABC transmembrane type-1 2 spans 947 to 1228; it reads CLYALFLFLC…VVRNWTDLEN (282 aa). Residues 961–997 are Extracellular-facing; sequence SFCRGYWLSLWADDPAVGGQQTQAALRGGIFGLLGCL. The chain crosses the membrane as a helical span at residues 998 to 1018; it reads QAIGLFASMAAVLLGGARASR. The Cytoplasmic portion of the chain corresponds to 1019–1061; the sequence is LLFQRLLWDVVRSPISFFERTPIGHLLNRFSKETDTVDVDIPD. A helical transmembrane segment spans residues 1062 to 1082; it reads KLRSLLMYAFGLLEVSLVVAV. Residue Ala1083 is a topological domain, extracellular. The chain crosses the membrane as a helical span at residues 1084-1104; that stretch reads TPLATVAILPLFLLYAGFQSL. The Cytoplasmic portion of the chain corresponds to 1105 to 1175; that stretch reads YVVSSCQLRR…VADRWLAANV (71 aa). The helical transmembrane segment at 1176-1196 threads the bilayer; it reads ELLGNGLVFAAATCAVLSKAH. Residues 1197–1198 lie on the Extracellular side of the membrane; sequence LS. A helical membrane pass occupies residues 1199 to 1219; the sequence is AGLVGFSVSAALQVTQTLQWV. Residues 1220–1503 lie on the Cytoplasmic side of the membrane; it reads VRNWTDLENS…YRLAQESGLV (284 aa). The ABC transporter 2 domain occupies 1265-1499; the sequence is IEFRDFGLRY…KGLFYRLAQE (235 aa). Position 1286 is a phosphoserine (Ser1286). Residue 1299–1306 participates in ATP binding; that stretch reads GRTGAGKS.

It belongs to the ABC transporter superfamily. ABCC family. Conjugate transporter (TC 3.A.1.208) subfamily. Mg(2+) serves as cofactor. In terms of processing, glycosylated. Expressed in kidney and liver. Very low expression in other tissues. In testis, localized to peritubular myoid cells, Leydig cells, along the basal membrane of Sertoli cells and moderately in the adluminal compartment of the seminiferous tubules.

Its subcellular location is the basal cell membrane. It localises to the basolateral cell membrane. It is found in the endoplasmic reticulum membrane. The enzyme catalyses an S-substituted glutathione(in) + ATP + H2O = an S-substituted glutathione(out) + ADP + phosphate + H(+). The catalysed reaction is leukotriene C4(in) + ATP + H2O = leukotriene C4(out) + ADP + phosphate + H(+). With respect to regulation, LTC4 transport is completely inhibited by 1 mM orthovanadate. Its function is as follows. ATP-dependent transporter of the ATP-binding cassette (ABC) family that actively extrudes physiological compounds, and xenobiotics from cells. Mediates ATP-dependent transport of glutathione conjugates such as leukotriene-c4 (LTC4) and N-ethylmaleimide S-glutathione (NEM-GS) (in vitro), and an anionic cyclopentapeptide endothelin antagonist, BQ-123. May contribute to regulate the transport of organic compounds in testes across the blood-testis-barrier. Does not appear to actively transport drugs outside the cell. Confers low levels of cellular resistance to etoposide, teniposide, anthracyclines and cisplatin. In terms of biological role, mediates the release of nucleoside triphosphates, predominantly ATP, into the circulation, where it is rapidly converted into AMP and the mineralization inhibitor inorganic pyrophosphate (PPi) by the ecto-enzyme ectonucleotide pyrophosphatase phosphodiesterase 1 (ENPP1), therefore playing a role in PPi homeostasis. Functionally, inhibits TNF-alpha-mediated apoptosis through blocking one or more caspases. This Homo sapiens (Human) protein is ATP-binding cassette sub-family C member 6 (ABCC6).